A 403-amino-acid polypeptide reads, in one-letter code: Cytoplasmic tRNA 2-thiolation protein 2 (403 aa).

Belongs to the CTU2/NCS2 family.

It is found in the cytoplasm. It functions in the pathway tRNA modification; 5-methoxycarbonylmethyl-2-thiouridine-tRNA biosynthesis. In terms of biological role, plays a central role in 2-thiolation of mcm(5)S(2)U at tRNA wobble positions of tRNA(Lys), tRNA(Glu) and tRNA(Gln). May act by forming a heterodimer with NCS6/CTU1 that ligates sulfur from thiocarboxylated URM1 onto the uridine of tRNAs at wobble position. The polypeptide is Cytoplasmic tRNA 2-thiolation protein 2 (Drosophila willistoni (Fruit fly)).